Reading from the N-terminus, the 507-residue chain is Histidine ammonia-lyase (507 aa).

A cross-link (5-imidazolinone (Ala-Gly)) is located at residues 142-144 (ASG). Serine 143 bears the 2,3-didehydroalanine (Ser) mark.

Belongs to the PAL/histidase family. In terms of processing, contains an active site 4-methylidene-imidazol-5-one (MIO), which is formed autocatalytically by cyclization and dehydration of residues Ala-Ser-Gly.

Its subcellular location is the cytoplasm. The enzyme catalyses L-histidine = trans-urocanate + NH4(+). Its pathway is amino-acid degradation; L-histidine degradation into L-glutamate; N-formimidoyl-L-glutamate from L-histidine: step 1/3. In Maricaulis maris (strain MCS10) (Caulobacter maris), this protein is Histidine ammonia-lyase.